A 371-amino-acid chain; its full sequence is tRNA-specific 2-thiouridylase MnmA (371 aa).

Residues 7-14 (GLSGGVDS) and M33 contribute to the ATP site. The tract at residues 103-105 (NPD) is interaction with target base in tRNA. Catalysis depends on C108, which acts as the Nucleophile. A disulfide bridge connects residues C108 and C201. G133 contributes to the ATP binding site. An interaction with tRNA region spans residues 151 to 153 (KDQ). The active-site Cysteine persulfide intermediate is the C201. The interaction with tRNA stretch occupies residues 308–309 (RY).

This sequence belongs to the MnmA/TRMU family.

Its subcellular location is the cytoplasm. The catalysed reaction is S-sulfanyl-L-cysteinyl-[protein] + uridine(34) in tRNA + AH2 + ATP = 2-thiouridine(34) in tRNA + L-cysteinyl-[protein] + A + AMP + diphosphate + H(+). Its function is as follows. Catalyzes the 2-thiolation of uridine at the wobble position (U34) of tRNA, leading to the formation of s(2)U34. This is tRNA-specific 2-thiouridylase MnmA from Mycoplasmopsis pulmonis (strain UAB CTIP) (Mycoplasma pulmonis).